The following is a 436-amino-acid chain: Phosphomethylpyrimidine synthase (436 aa).

Substrate contacts are provided by residues Asn69, Met98, Tyr127, His163, 185–187 (SRG), 226–229 (DACR), and Glu265. Zn(2+) is bound at residue His269. Tyr292 is a substrate binding site. A Zn(2+)-binding site is contributed by His333. [4Fe-4S] cluster-binding residues include Cys409, Cys412, and Cys416.

This sequence belongs to the ThiC family. The cofactor is [4Fe-4S] cluster.

It catalyses the reaction 5-amino-1-(5-phospho-beta-D-ribosyl)imidazole + S-adenosyl-L-methionine = 4-amino-2-methyl-5-(phosphooxymethyl)pyrimidine + CO + 5'-deoxyadenosine + formate + L-methionine + 3 H(+). Its pathway is cofactor biosynthesis; thiamine diphosphate biosynthesis. Functionally, catalyzes the synthesis of the hydroxymethylpyrimidine phosphate (HMP-P) moiety of thiamine from aminoimidazole ribotide (AIR) in a radical S-adenosyl-L-methionine (SAM)-dependent reaction. The polypeptide is Phosphomethylpyrimidine synthase (Clostridium perfringens (strain SM101 / Type A)).